The primary structure comprises 511 residues: Maturase K (511 aa).

The protein belongs to the intron maturase 2 family. MatK subfamily.

It is found in the plastid. The protein resides in the chloroplast. Usually encoded in the trnK tRNA gene intron. Probably assists in splicing its own and other chloroplast group II introns. The protein is Maturase K of Psathyrostachys juncea (Russian wildrye).